The primary structure comprises 858 residues: Protein translocase subunit SecA (858 aa).

ATP is bound by residues Q85, 103–107 (GEGKT), and D511. 4 residues coordinate Zn(2+): C840, C842, C851, and C852.

This sequence belongs to the SecA family. Monomer and homodimer. Part of the essential Sec protein translocation apparatus which comprises SecA, SecYEG and auxiliary proteins SecDF. Other proteins may also be involved. The cofactor is Zn(2+).

It localises to the cell membrane. The protein localises to the cytoplasm. It carries out the reaction ATP + H2O + cellular proteinSide 1 = ADP + phosphate + cellular proteinSide 2.. Part of the Sec protein translocase complex. Interacts with the SecYEG preprotein conducting channel. Has a central role in coupling the hydrolysis of ATP to the transfer of proteins into and across the cell membrane, serving as an ATP-driven molecular motor driving the stepwise translocation of polypeptide chains across the membrane. The polypeptide is Protein translocase subunit SecA (Lachnoclostridium phytofermentans (strain ATCC 700394 / DSM 18823 / ISDg) (Clostridium phytofermentans)).